A 626-amino-acid chain; its full sequence is MTVEERQGRVGGHGVSGGGGGRDQFPVGMRVLAVDDDPTCLKILENLLLRCQYHVTTTGQAATALKLLRENKDQFDLVISDVHMPDMDGFKLLELVGLEMDLPVIMLSANGETQTVMKGITHGACDYLLKPVRLEQLRTIWQHVIRRKNCDAKNRGNDDDAGQKAQGMNNEGESIGANRNKRQSRKSRDENGDDGDDSDENSNENGDSSTQKKPRVVWSVELHRKFVAAVNQLGIEKAVPKKILDLMNVENITRENVASHLQKYRLYLKRLSTDASRQANLAAAFGGRNPAYINMNSFGNYNAYGRYRTVPTAGHTQANNILTRMNSPSAFGVHGLLHSQPIQLGHAQNNLSTSLNDLGGLNNGNMIRGAQMSTILTGPSGNSFPNISNGAPLATANRSLQPLESSNQQHLSRVHSSSADPFSTLVGESPQFPDLGRTTNTWQTAVPSNIQDRGHNDNMSQATLHMNGPKIEPVSSFTSSNQIPLLGNEMQGQVASLASNVPIAFNQDTSPFNYGSSTNSRDMLNNSHVFSNSSINTSLPNLSLDNPAVPRQTLDRGNTGIVSPMQDGRIHHQAVSNQLNYNDDLMRTTGLQRGLSGGLDDIVVDMFRPDREDDGVPYIDGDWELV.

Positions 1 to 22 (MTVEERQGRVGGHGVSGGGGGR) are disordered. Over residues 9 to 22 (RVGGHGVSGGGGGR) the composition is skewed to gly residues. Positions 30–145 (RVLAVDDDPT…QLRTIWQHVI (116 aa)) constitute a Response regulatory domain. Asp-81 carries the post-translational modification 4-aspartylphosphate. Positions 151–162 (DAKNRGNDDDAG) are enriched in basic and acidic residues. Disordered stretches follow at residues 151 to 215 (DAKN…KKPR) and 402 to 440 (PLESSNQQHLSRVHSSSADPFSTLVGESPQFPDLGRTTN). Positions 191-202 (NGDDGDDSDENS) are enriched in acidic residues. Positions 210–269 (TQKKPRVVWSVELHRKFVAAVNQLGIEKAVPKKILDLMNVENITRENVASHLQKYRLYLK) form a DNA-binding region, myb-like GARP. Residues 402 to 421 (PLESSNQQHLSRVHSSSADP) are compositionally biased toward polar residues.

It belongs to the ARR family. Type-B subfamily. In terms of processing, two-component system major event consists of a His-to-Asp phosphorelay between a sensor histidine kinase (HK) and a response regulator (RR). In plants, the His-to-Asp phosphorelay involves an additional intermediate named Histidine-containing phosphotransfer protein (HPt). This multistep phosphorelay consists of a His-Asp-His-Asp sequential transfer of a phosphate group between first a His and an Asp of the HK protein, followed by the transfer to a conserved His of the HPt protein and finally the transfer to an Asp in the receiver domain of the RR protein.

The protein resides in the nucleus. Its function is as follows. Transcriptional activator that binds specific DNA sequence. Functions as a response regulator involved in His-to-Asp phosphorelay signal transduction system. Phosphorylation of the Asp residue in the receiver domain activates the ability of the protein to promote the transcription of target genes. May directly activate some type-A response regulators in response to cytokinins. The chain is Two-component response regulator ORR24 from Oryza sativa subsp. japonica (Rice).